The chain runs to 180 residues: Methionine-R-sulfoxide reductase B2, mitochondrial (180 aa).

Residues 1–41 (MSRFLVRLSTVVSKGATGKSVLPQKRIFAGIRLISSSTGLQ) constitute a mitochondrion transit peptide. A MsrB domain is found at 49–178 (STDWQRKLSP…NSVALNFKPR (130 aa)). Positions 88, 91, 144, and 147 each coordinate Zn(2+). Cys-167 serves as the catalytic Nucleophile.

Belongs to the MsrB Met sulfoxide reductase family. Zn(2+) serves as cofactor.

Its subcellular location is the mitochondrion. It carries out the reaction L-methionyl-[protein] + [thioredoxin]-disulfide + H2O = L-methionyl-(R)-S-oxide-[protein] + [thioredoxin]-dithiol. The enzyme catalyses [thioredoxin]-disulfide + L-methionine + H2O = L-methionine (R)-S-oxide + [thioredoxin]-dithiol. Its function is as follows. Methionine-sulfoxide reductase that specifically reduces methionine (R)-sulfoxide back to methionine. While in many cases, methionine oxidation is the result of random oxidation following oxidative stress, methionine oxidation is also a post-translational modification that takes place on specific residue. Upon oxidative stress, may play a role in the preservation of mitochondrial integrity by decreasing the intracellular reactive oxygen species build-up through its scavenging role, hence contributing to cell survival and protein maintenance. This chain is Methionine-R-sulfoxide reductase B2, mitochondrial (msrb2), found in Danio rerio (Zebrafish).